The following is a 440-amino-acid chain: V-type ATP synthase beta chain (440 aa).

Belongs to the ATPase alpha/beta chains family.

Functionally, produces ATP from ADP in the presence of a proton gradient across the membrane. The V-type beta chain is a regulatory subunit. In Geotalea uraniireducens (strain Rf4) (Geobacter uraniireducens), this protein is V-type ATP synthase beta chain.